Reading from the N-terminus, the 565-residue chain is MPAEIARRIAQGAGREPADLVIRGARLLDLVTGELVPTDIAVCGEVVVGTYGEYEGARVIEAASRIAVPGFIDTHLHIESSLITPHEFDRCVLPHGVTTAIWDPHELANVLGTAAFDYALQASTETAMDIRVQLSSCVPATDLESAGARIEAADLLPYRDHPRSLGIAEFMNFPGVVQADPGCLAKLAAFAGRHVDGHAPLLSGSGLNAYAAAGIRTDHEATGAAEALEKIRKGMTVLIREGSVSKDLAALAPLLTVATSPFLAFCTDDRNPLDIAEEGHLDHLIRTAIRLGVPPLAAYRAASLSAATAFGLTDRGMIAPGRRADIVLLDDLEACAVARVIAGGRAVEEALFAGRARTPAPGRGSVKAAPVAAEDFRIPGADGAETSVIGVVPGRIITEHRRLELPAANGCAGCDLDQDVVKVAVIARHGRPGMGRGFVQGFGLRRGAIASSVGHDSHNLCVVGADDADMAVAINRLIALQGGFVVAAGGTVLAELALPIAGLMSDLPFEAVRDALHPLREAARTLGCTLPEPFLQVAFLPLPVIPHLKITDRGLVDVDRMRLLG.

It belongs to the metallo-dependent hydrolases superfamily. Adenine deaminase family. Mn(2+) serves as cofactor.

It carries out the reaction adenine + H2O + H(+) = hypoxanthine + NH4(+). The protein is Adenine deaminase of Methylobacterium nodulans (strain LMG 21967 / CNCM I-2342 / ORS 2060).